The primary structure comprises 541 residues: GPI alpha-1,2-mannosyltransferase 3 (541 aa).

N-linked (GlcNAc...) asparagine glycosylation is present at Asn-18. The next 9 membrane-spanning stretches (helical) occupy residues 53–73 (LVLF…TSFV), 126–146 (VHLL…IADL), 182–202 (LTNT…PLEG), 214–234 (LVAL…PLLF), 245–265 (DLIL…SLII), 305–325 (GFPA…FLAP), 330–350 (IFLV…HKEF), 352–372 (FIYP…NNLK), and 377–397 (PALS…GLVH). N-linked (GlcNAc...) asparagine glycosylation is present at Asn-417.

It belongs to the glycosyltransferase 22 family. PIGB subfamily.

The protein resides in the endoplasmic reticulum membrane. The protein operates within glycolipid biosynthesis; glycosylphosphatidylinositol-anchor biosynthesis. Functionally, alpha-1,2-mannosyltransferase that catalyzes the transfer of the third mannose, via an alpha-1,2 bond, from a dolichol-phosphate-mannose (Dol-P-Man) to an alpha-D-Man-(1-&gt;6)-2-PEtn-alpha-D-Man-(1-&gt;4)-alpha-D-GlcN-(1-&gt;6)-(1-radyl,2-acyl-sn-glycero-3-phospho)-2-acyl-inositol intermediate to generate an alpha-D-Man-(1-&gt;2)-alpha-D-Man-(1-&gt;6)-2-PEtn-alpha-D-Man-(1-&gt;4)-alpha-D-GlcN-(1-&gt;6)-(1-radyl,2-acyl-sn-glycero-3-phospho)-2-acyl-inositol (also termed H6) and participates in the nineth step of the glycosylphosphatidylinositol-anchor biosynthesis. May also add the third mannose to an alpha-D-Man-(1-&gt;6)-alpha-D-Man-(1-&gt;4)-alpha-D-GlcN-(1-&gt;6)-(1-radyl,2-acyl-sn-glycero-3-phospho)-2-acyl-inositol (also termed H3) intermediate generating an alpha-D-Man-(1-&gt;2)-alpha-D-Man-(1-&gt;6)-alpha-D-Man-(1-&gt;4)-alpha-D-GlcN-(1-&gt;6)-(1-radyl,2-acyl-sn-glycero-3-phospho)-2-acyl-inositol (also termed H4). This chain is GPI alpha-1,2-mannosyltransferase 3, found in Bos taurus (Bovine).